Consider the following 218-residue polypeptide: ATP-dependent Clp protease proteolytic subunit 2 (218 aa).

The protein belongs to the peptidase S14 family. As to quaternary structure, fourteen ClpP subunits assemble into 2 heptameric rings which stack back to back to give a disk-like structure with a central cavity, resembling the structure of eukaryotic proteasomes.

It is found in the cytoplasm. The enzyme catalyses Hydrolysis of proteins to small peptides in the presence of ATP and magnesium. alpha-casein is the usual test substrate. In the absence of ATP, only oligopeptides shorter than five residues are hydrolyzed (such as succinyl-Leu-Tyr-|-NHMec, and Leu-Tyr-Leu-|-Tyr-Trp, in which cleavage of the -Tyr-|-Leu- and -Tyr-|-Trp bonds also occurs).. In terms of biological role, cleaves peptides in various proteins in a process that requires ATP hydrolysis. Has a chymotrypsin-like activity. Plays a major role in the degradation of misfolded proteins. In Gloeobacter violaceus (strain ATCC 29082 / PCC 7421), this protein is ATP-dependent Clp protease proteolytic subunit 2.